The following is a 635-amino-acid chain: ATP-binding protein Uup (635 aa).

ABC transporter domains follow at residues 1–253 (MSLI…RVEE) and 320–546 (FEME…KTEE). Residues 36–43 (GRNGAGKS) and 352–359 (GPNGCGKT) each bind ATP. The C-terminal domain (CTD), binds DNA, required to complement a deletion mutant stretch occupies residues 551–635 (KAETVKRSSS…EYLEALKNGG (85 aa)). Positions 563-631 (SYKLQRELEQ…FERWEYLEAL (69 aa)) form a coiled coil.

The protein belongs to the ABC transporter superfamily. ABCF family. Uup subfamily.

The protein localises to the cytoplasm. It catalyses the reaction ATP + H2O = ADP + phosphate + H(+). ATPase activity inhibited by N-ethylmaleimide but not by vanadate. Probably plays a role in ribosome assembly or function; overexpression suppresses cold-sensitive growth of a bipA deletion. May be involved in resolution of branched DNA intermediates that result from template switching in postreplication gaps. Binds DNA at Holliday junctions. May be involved in the correct segregation of nucleoids. Has ATPase activity, binds DNA non-sequence specifically; the presence of DNA does not change the ATPase activity. Mutations in this gene cause an increase in RecA-independent precise excision of transposons and insertion elements, and also reduce bacteriophage Mu growth. Genetic interactions among priB, dam, lexA, nagC, polA, rdgB, rdgB, rep and uup link the PriA-PriB replication restart pathway to DNA double-strand break repair. The sequence is that of ATP-binding protein Uup from Escherichia coli (strain K12).